Here is a 54-residue protein sequence, read N- to C-terminus: UPF0391 membrane protein Tbd_2238 (54 aa).

The next 2 membrane-spanning stretches (helical) occupy residues Ala-5–Ala-25 and Val-28–Val-48.

This sequence belongs to the UPF0391 family.

It is found in the cell membrane. The polypeptide is UPF0391 membrane protein Tbd_2238 (Thiobacillus denitrificans (strain ATCC 25259 / T1)).